Here is a 152-residue protein sequence, read N- to C-terminus: UPF0178 protein KPK_4355 (152 aa).

Belongs to the UPF0178 family.

This Klebsiella pneumoniae (strain 342) protein is UPF0178 protein KPK_4355.